Reading from the N-terminus, the 1476-residue chain is Glucosyltransferase-I (1476 aa).

The first 34 residues, 1 to 34 (MDKKVRYKLRKVKKRWVTVSVASAVMTLTTLSGG), serve as a signal peptide directing secretion. Disordered stretches follow at residues 42–89 (ESKS…ISSS) and 102–141 (PYTV…TEAD). 2 stretches are compositionally biased toward polar residues: residues 43–81 (SKSQ…QTNH) and 102–139 (PYTV…QTTE). Cell wall-binding repeat units lie at residues 159 to 178 (LPNV…NGKV) and 179 to 199 (RTNF…TGAY). Positions 200 to 1051 (TDTSIDTVNK…NTYFNISDNK (852 aa)) are catalytic; approximate. Cell wall-binding repeat units lie at residues 1087 to 1106 (KNTF…NGYM), 1107 to 1126 (VTGA…NGLQ), 1170 to 1189 (SVGL…MGYQ), 1214 to 1234 (RNRF…DGAA), 1235 to 1254 (VTGS…NGVQ), 1279 to 1299 (RNRF…NGYA), 1300 to 1319 (VTGA…NGVQ), 1344 to 1364 (RNRF…NGYA), 1365 to 1384 (VTGA…NGVQ), 1409 to 1429 (RNRF…NGYA), and 1430 to 1449 (VTGA…NGVQ).

It belongs to the glycosyl hydrolase 70 family.

Its subcellular location is the secreted. The catalysed reaction is [(1-&gt;6)-alpha-D-glucosyl](n) + sucrose = [(1-&gt;6)-alpha-D-glucosyl](n+1) + D-fructose. Its function is as follows. Production of extracellular glucans, that are thought to play a key role in the development of the dental plaque because of their ability to adhere to smooth surfaces and mediate the aggregation of bacterial cells and food debris. The sequence is that of Glucosyltransferase-I (gtfB) from Streptococcus mutans serotype c (strain ATCC 700610 / UA159).